The following is a 186-amino-acid chain: Ribosome-recycling factor (186 aa).

It belongs to the RRF family.

It localises to the cytoplasm. In terms of biological role, responsible for the release of ribosomes from messenger RNA at the termination of protein biosynthesis. May increase the efficiency of translation by recycling ribosomes from one round of translation to another. The sequence is that of Ribosome-recycling factor from Leifsonia xyli subsp. xyli (strain CTCB07).